The primary structure comprises 325 residues: Elongation factor P--(R)-beta-lysine ligase (325 aa).

76 to 78 (SPE) is a binding site for substrate. ATP contacts are provided by residues 100–102 (RNE) and N109. Substrate is bound at residue Y118. 244-245 (EL) serves as a coordination point for ATP. A substrate-binding site is contributed by E251. Residue G300 coordinates ATP.

This sequence belongs to the class-II aminoacyl-tRNA synthetase family. EpmA subfamily. In terms of assembly, homodimer.

It carries out the reaction D-beta-lysine + L-lysyl-[protein] + ATP = N(6)-((3R)-3,6-diaminohexanoyl)-L-lysyl-[protein] + AMP + diphosphate + H(+). Its function is as follows. With EpmB is involved in the beta-lysylation step of the post-translational modification of translation elongation factor P (EF-P) on 'Lys-34'. Catalyzes the ATP-dependent activation of (R)-beta-lysine produced by EpmB, forming a lysyl-adenylate, from which the beta-lysyl moiety is then transferred to the epsilon-amino group of EF-P 'Lys-34'. In Salmonella gallinarum (strain 287/91 / NCTC 13346), this protein is Elongation factor P--(R)-beta-lysine ligase.